The primary structure comprises 453 residues: Bifunctional protein GlmU (453 aa).

The segment at 1-227 (MAVSVIILAA…SIEVMGVNDR (227 aa)) is pyrophosphorylase. UDP-N-acetyl-alpha-D-glucosamine contacts are provided by residues 8-11 (LAAG), Lys22, Gln73, 78-79 (GT), 100-102 (SGD), Gly137, Glu152, Asn167, and Asn225. Residue Asp102 participates in Mg(2+) binding. A Mg(2+)-binding site is contributed by Asn225. Residues 228–248 (QQLAYLERFYQKREAARLMGE) form a linker region. Positions 249-453 (GVSLSDPDRF…WPGWKRPSKK (205 aa)) are N-acetyltransferase. The UDP-N-acetyl-alpha-D-glucosamine site is built by Arg331 and Lys349. The active-site Proton acceptor is the His361. Tyr364 and Asn375 together coordinate UDP-N-acetyl-alpha-D-glucosamine. Acetyl-CoA-binding positions include Ala378, 384–385 (NY), Ser403, Ala421, and Arg438. The tract at residues 430 to 453 (PPGELTLSRTPQKSWPGWKRPSKK) is disordered.

This sequence in the N-terminal section; belongs to the N-acetylglucosamine-1-phosphate uridyltransferase family. It in the C-terminal section; belongs to the transferase hexapeptide repeat family. As to quaternary structure, homotrimer. It depends on Mg(2+) as a cofactor.

It is found in the cytoplasm. The enzyme catalyses alpha-D-glucosamine 1-phosphate + acetyl-CoA = N-acetyl-alpha-D-glucosamine 1-phosphate + CoA + H(+). It catalyses the reaction N-acetyl-alpha-D-glucosamine 1-phosphate + UTP + H(+) = UDP-N-acetyl-alpha-D-glucosamine + diphosphate. It functions in the pathway nucleotide-sugar biosynthesis; UDP-N-acetyl-alpha-D-glucosamine biosynthesis; N-acetyl-alpha-D-glucosamine 1-phosphate from alpha-D-glucosamine 6-phosphate (route II): step 2/2. Its pathway is nucleotide-sugar biosynthesis; UDP-N-acetyl-alpha-D-glucosamine biosynthesis; UDP-N-acetyl-alpha-D-glucosamine from N-acetyl-alpha-D-glucosamine 1-phosphate: step 1/1. It participates in bacterial outer membrane biogenesis; LPS lipid A biosynthesis. Functionally, catalyzes the last two sequential reactions in the de novo biosynthetic pathway for UDP-N-acetylglucosamine (UDP-GlcNAc). The C-terminal domain catalyzes the transfer of acetyl group from acetyl coenzyme A to glucosamine-1-phosphate (GlcN-1-P) to produce N-acetylglucosamine-1-phosphate (GlcNAc-1-P), which is converted into UDP-GlcNAc by the transfer of uridine 5-monophosphate (from uridine 5-triphosphate), a reaction catalyzed by the N-terminal domain. The chain is Bifunctional protein GlmU from Nitrosococcus oceani (strain ATCC 19707 / BCRC 17464 / JCM 30415 / NCIMB 11848 / C-107).